The following is a 295-amino-acid chain: N-acetylmuramic acid 6-phosphate etherase (295 aa).

The region spanning 53-216 (AIQRFNNGGR…STMTMIGVGK (164 aa)) is the SIS domain. Glu-81 functions as the Proton donor in the catalytic mechanism. The active site involves Glu-112.

This sequence belongs to the GCKR-like family. MurNAc-6-P etherase subfamily. In terms of assembly, homodimer.

It catalyses the reaction N-acetyl-D-muramate 6-phosphate + H2O = N-acetyl-D-glucosamine 6-phosphate + (R)-lactate. It participates in amino-sugar metabolism; N-acetylmuramate degradation. Its function is as follows. Specifically catalyzes the cleavage of the D-lactyl ether substituent of MurNAc 6-phosphate, producing GlcNAc 6-phosphate and D-lactate. The sequence is that of N-acetylmuramic acid 6-phosphate etherase from Staphylococcus epidermidis (strain ATCC 35984 / DSM 28319 / BCRC 17069 / CCUG 31568 / BM 3577 / RP62A).